The chain runs to 436 residues: Retinoic acid receptor RXR (436 aa).

Residues 1 to 108 (MDRSEGMDTL…GPSPSPGLPH (108 aa)) form a disordered region. The modulating stretch occupies residues 1–116 (MDRSEGMDTL…PHSSLHTKHI (116 aa)). Residues 13 to 22 (SMPSGMSMGM) show a composition bias toward low complexity. Polar residues-rich tracts occupy residues 40–49 (SSLTSPTSTH) and 62–76 (MASS…QQMH). Low complexity predominate over residues 85–98 (SSMGSPPMLCLSPS). 2 consecutive NR C4-type zinc fingers follow at residues 117–137 (CAIC…CEGC) and 153–172 (CRDD…CQYC). The segment at residues 117–182 (CAICGDRASG…RYMKCLSMGM (66 aa)) is a DNA-binding region (nuclear receptor). The segment at 183 to 206 (KREAVQEERQRVKEKGDGEVESTS) is hinge. Basic and acidic residues predominate over residues 189–200 (EERQRVKEKGDG). The disordered stretch occupies residues 189–209 (EERQRVKEKGDGEVESTSGAN). The 224-residue stretch at 209–432 (NNDMPVEQIL…TFLMEMLENP (224 aa)) folds into the NR LBD domain. 9-cis-retinoate-binding residues include Arg290 and Ala301.

It belongs to the nuclear hormone receptor family. NR2 subfamily. In terms of assembly, homodimer (via ligand-binding domain). Heterodimer. Homotetramer consisting of 2 canonical homodimers. Within the tetramer, each monomer binds one molecule of 9C-RA and a NCOA1-derived peptide containing an L-X(2)-L-L motif.

Its subcellular location is the nucleus. Ligand-dependent transcription factor probably involved in the retinoic acid response pathway. Binds 9-cis-retinoic acid (9C-RA) and, to a lesser extent, docosahexaenoic acid (DHA), phytanic acid, methoprene acid and oleic acid. Binds to double-stranded DNA sequences containing direct repeats (DR) with the consensus sequence 5'-[AG]GGTCA-3' and 1, 2, 3, 4 or 5 nucleotides in between (DR1, DR2, DR3. DR4 and DR5, respectively). Binding to DR1 is strongest. Transactivates gene expression when 9C-RA or DHA is bound. This is Retinoic acid receptor RXR from Biomphalaria glabrata (Bloodfluke planorb).